A 338-amino-acid chain; its full sequence is Ornithine carbamoyltransferase (338 aa).

Ser-2 is subject to N-acetylserine. Residues 67–70, Arg-118, His-145, and Gln-148 contribute to the carbamoyl phosphate site; that span reads STRT. Asn-185, Asp-249, Ser-253, and Met-254 together coordinate L-ornithine. The active-site Proton acceptor is the Cys-289. Carbamoyl phosphate is bound by residues 289 to 290 and Arg-316; that span reads CL.

It belongs to the aspartate/ornithine carbamoyltransferase superfamily. OTCase family. Interacts with CAR1.

The protein localises to the cytoplasm. It carries out the reaction carbamoyl phosphate + L-ornithine = L-citrulline + phosphate + H(+). It functions in the pathway amino-acid biosynthesis; L-arginine biosynthesis; L-arginine from L-ornithine and carbamoyl phosphate: step 1/3. With respect to regulation, forms a stable complex with CAR1 in the presence of ornithine and arginine. In this complex CAR1 retains activity, but ARG3 activity is inhibited. The protein is Ornithine carbamoyltransferase (ARG3) of Saccharomyces cerevisiae (strain ATCC 204508 / S288c) (Baker's yeast).